The sequence spans 566 residues: Mucin-21 (566 aa).

An N-terminal signal peptide occupies residues 1–24; it reads MKMQKGNVLLMFGLLLHLEAATNS. Asn-25 is a glycosylation site (N-linked (GlcNAc...) asparagine). The interval 25 to 68 is disordered; that stretch reads NETSTSANTGSSVISSGASTATNSGSSVTSSGVSTATISGSSVT. The Extracellular segment spans residues 25 to 479; it reads NETSTSANTG…KPGGSLVPWE (455 aa). A run of 28 repeats spans residues 31–44, 45–59, 60–74, 75–89, 90–104, 105–119, 120–134, 135–149, 150–164, 165–179, 180–194, 195–209, 210–224, 225–239, 244–254, 255–269, 270–284, 285–299, 300–314, 315–329, 330–344, 345–359, 360–374, 375–389, 390–404, 405–419, 420–434, and 435–449. The tract at residues 31-435 is 28 X 15 AA approximate tandem repeats; it reads ANTGSSVISS…STTSSGANTA (405 aa). The interval 106–456 is disordered; sequence TNSESSTTSS…SGTAALTGMH (351 aa). A helical membrane pass occupies residues 480-500; it reads IFLITLVSVVAAVGLFAGLFF. Residues 501-566 lie on the Cytoplasmic side of the membrane; it reads CVRNSLSLRN…MEMSGRNSGP (66 aa). Residues 521-566 form a cytoplasmic tail region; the sequence is GLNHGLGPGPGGNHGAPHRPRWSPNWFWRRPVSSIAMEMSGRNSGP.

O-glycosylated. In terms of tissue distribution, expressed in lung, large intestine, thymus, and testis. Expressed in normal and malignant bronchial epithelial cells.

Its subcellular location is the cell membrane. The chain is Mucin-21 (MUC21) from Homo sapiens (Human).